A 292-amino-acid chain; its full sequence is Very long chain fatty acid elongase 2 (292 aa).

7 helical membrane-spanning segments follow: residues 29 to 49 (WFLL…LLSI), 67 to 87 (ILTL…VELI), 115 to 135 (VLWW…FFVL), 153 to 173 (MFNI…FFGP), 175 to 195 (LNSF…FPSM), 205 to 225 (LTQA…SAVV), and 230 to 250 (FPFG…ILFL). A Di-lysine motif motif is present at residues 289-292 (KKAQ).

This sequence belongs to the ELO family. ELOVL2 subfamily. As to quaternary structure, interacts with TECR. As to expression, highly expressed in testis, lower level in liver. Weakly expressed in white adipose tissue, brain and kidney.

It localises to the endoplasmic reticulum membrane. It carries out the reaction a very-long-chain acyl-CoA + malonyl-CoA + H(+) = a very-long-chain 3-oxoacyl-CoA + CO2 + CoA. The enzyme catalyses (5Z,8Z,11Z,14Z)-eicosatetraenoyl-CoA + malonyl-CoA + H(+) = (7Z,10Z,13Z,16Z)-3-oxodocosatetraenoyl-CoA + CO2 + CoA. The catalysed reaction is (7Z,10Z,13Z,16Z)-docosatetraenoyl-CoA + malonyl-CoA + H(+) = (9Z,12Z,15Z,18Z)-3-oxotetracosatetraenoyl-CoA + CO2 + CoA. It catalyses the reaction (5Z,8Z,11Z,14Z,17Z)-eicosapentaenoyl-CoA + malonyl-CoA + H(+) = 3-oxo-(7Z,10Z,13Z,16Z,19Z)-docosapentaenoyl-CoA + CO2 + CoA. It carries out the reaction (7Z,10Z,13Z,16Z,19Z)-docosapentaenoyl-CoA + malonyl-CoA + H(+) = (9Z,12Z,15Z,18Z,21Z)-3-oxotetracosapentaenoyl-CoA + CO2 + CoA. Its pathway is lipid metabolism; polyunsaturated fatty acid biosynthesis. Functionally, catalyzes the first and rate-limiting reaction of the four reactions that constitute the long-chain fatty acids elongation cycle. This endoplasmic reticulum-bound enzymatic process allows the addition of 2 carbons to the chain of long- and very long-chain fatty acids (VLCFAs) per cycle. Condensing enzyme that catalyzes the synthesis of polyunsaturated very long chain fatty acid (C20- and C22-PUFA), acting specifically toward polyunsaturated acyl-CoA with the higher activity toward C20:4(n-6) acyl-CoA. May participate in the production of polyunsaturated VLCFAs of different chain lengths that are involved in multiple biological processes as precursors of membrane lipids and lipid mediators. Essential for the formation of C24:5(n-6) up to C30:5(n-6) PUFAs in testis, these fatty acids being indispensable for normal spermatogenesis and fertility. This is Very long chain fatty acid elongase 2 from Mus musculus (Mouse).